Consider the following 272-residue polypeptide: Glutamate racemase (272 aa).

Residues 10–11 (DS) and 42–43 (YG) each bind substrate. The active-site Proton donor/acceptor is the C74. 75-76 (NT) serves as a coordination point for substrate. C185 serves as the catalytic Proton donor/acceptor. 186 to 187 (TH) contributes to the substrate binding site.

The protein belongs to the aspartate/glutamate racemases family.

The enzyme catalyses L-glutamate = D-glutamate. The protein operates within cell wall biogenesis; peptidoglycan biosynthesis. Provides the (R)-glutamate required for cell wall biosynthesis. The polypeptide is Glutamate racemase (Bacillus pumilus (strain SAFR-032)).